The sequence spans 130 residues: Protachykinin-1 (130 aa).

A signal peptide spans 1 to 19 (MKILVAVAVIFFISTQLSA). The propeptide occupies 20–56 (EEIGANDDFNYWSDWSDSDQIKEEMPEPFEHLLQRIA). Methionine amide is present on residues methionine 68 and methionine 107.

This sequence belongs to the tachykinin family. The substance P form is cleaved at Pro-59 by the prolyl endopeptidase FAP (seprase) activity (in vitro). Substance P is also cleaved and degraded by Angiotensin-converting enzyme (ACE) and neprilysin (MME).

The protein resides in the secreted. Tachykinins are active peptides which excite neurons, evoke behavioral responses, are potent vasodilators and secretagogues, and contract (directly or indirectly) many smooth muscles. The chain is Protachykinin-1 (TAC1) from Bos taurus (Bovine).